Reading from the N-terminus, the 635-residue chain is Interferon-induced GTP-binding protein Mx2 (635 aa).

The 274-residue stretch at 31–304 (DLALPAIAVI…LVQHIEKSMP (274 aa)) folds into the Dynamin-type G domain. Residues 41–48 (GDQSSGKS) are G1 motif. Residue 41–48 (GDQSSGKS) participates in GTP binding. Residues 66–68 (VTR) are G2 motif. Residues 142-145 (DLPG) form a G3 motif region. GTP-binding positions include 142 to 146 (DLPGI) and 211 to 214 (TKPD). The segment at 211-214 (TKPD) is G4 motif. A G5 motif region spans residues 243 to 246 (KCRG). A GED domain is found at 549–635 (LREMMLHLKS…MKAHNYLVEF (87 aa)).

It belongs to the TRAFAC class dynamin-like GTPase superfamily. Dynamin/Fzo/YdjA family.

The protein localises to the nucleus. Its subcellular location is the cytoplasm. Functionally, does not inhibit strain RB-1 of the fish pathogen, infectious hematopoietic necrosis virus (IHNV). The chain is Interferon-induced GTP-binding protein Mx2 from Oncorhynchus mykiss (Rainbow trout).